We begin with the raw amino-acid sequence, 328 residues long: Stress response kinase A (328 aa).

Residue Asp-201 is the Proton acceptor of the active site. Mg(2+) contacts are provided by Asn-206 and Asp-217. Residue Asp-217 is part of the active site.

It belongs to the SrkA/RdoA protein kinase family. In terms of assembly, monomer. The cofactor is Mg(2+).

Its subcellular location is the cytoplasm. The enzyme catalyses L-seryl-[protein] + ATP = O-phospho-L-seryl-[protein] + ADP + H(+). It carries out the reaction L-threonyl-[protein] + ATP = O-phospho-L-threonyl-[protein] + ADP + H(+). Functionally, a protein kinase that phosphorylates Ser and Thr residues. Probably acts to suppress the effects of stress linked to accumulation of reactive oxygen species. Probably involved in the extracytoplasmic stress response. This chain is Stress response kinase A, found in Escherichia coli O6:H1 (strain CFT073 / ATCC 700928 / UPEC).